The sequence spans 156 residues: Aspartate carbamoyltransferase regulatory chain (156 aa).

Residues Cys109, Cys114, Cys140, and Cys143 each contribute to the Zn(2+) site.

This sequence belongs to the PyrI family. Contains catalytic and regulatory chains. It depends on Zn(2+) as a cofactor.

Involved in allosteric regulation of aspartate carbamoyltransferase. The protein is Aspartate carbamoyltransferase regulatory chain of Methanosarcina acetivorans (strain ATCC 35395 / DSM 2834 / JCM 12185 / C2A).